The sequence spans 435 residues: Serine--tRNA ligase (435 aa).

242 to 244 is an L-serine binding site; the sequence is TAE. Residue 273–275 coordinates ATP; the sequence is RSE. Glu296 is a binding site for L-serine. 360-363 is a binding site for ATP; the sequence is EISS. Ser396 contacts L-serine.

This sequence belongs to the class-II aminoacyl-tRNA synthetase family. Type-1 seryl-tRNA synthetase subfamily. As to quaternary structure, homodimer. The tRNA molecule binds across the dimer.

The protein resides in the cytoplasm. It catalyses the reaction tRNA(Ser) + L-serine + ATP = L-seryl-tRNA(Ser) + AMP + diphosphate + H(+). It carries out the reaction tRNA(Sec) + L-serine + ATP = L-seryl-tRNA(Sec) + AMP + diphosphate + H(+). Its pathway is aminoacyl-tRNA biosynthesis; selenocysteinyl-tRNA(Sec) biosynthesis; L-seryl-tRNA(Sec) from L-serine and tRNA(Sec): step 1/1. Functionally, catalyzes the attachment of serine to tRNA(Ser). Is also able to aminoacylate tRNA(Sec) with serine, to form the misacylated tRNA L-seryl-tRNA(Sec), which will be further converted into selenocysteinyl-tRNA(Sec). This Aliivibrio salmonicida (strain LFI1238) (Vibrio salmonicida (strain LFI1238)) protein is Serine--tRNA ligase.